Reading from the N-terminus, the 127-residue chain is MADDTTWGIANVYASFNNTIITVTDMTGAETIVKSSGGTVVKQNRDEASPYAAMQMAEVVAEDVKDAGIDGVHVRVRGPGGNQQQNPGPGAQATIRALARAGLEIGRIEDVTPIPHDGTRGPKNAGF.

This sequence belongs to the universal ribosomal protein uS11 family. As to quaternary structure, part of the 30S ribosomal subunit.

Located on the platform of the 30S subunit. This is Small ribosomal subunit protein uS11 from Natronomonas pharaonis (strain ATCC 35678 / DSM 2160 / CIP 103997 / JCM 8858 / NBRC 14720 / NCIMB 2260 / Gabara) (Halobacterium pharaonis).